The chain runs to 502 residues: MSTDTILSFEEAMEKYDPVLGFEVHVELNTKTKMFSSAPNVFGDEPNTNVNEVDLGMPGVLPVVNKTAIESSIKIGLALNCKIAETCRFARKQYFYPDTPKNFQTSQYDEPIAYDGYLDIELEDGTVFRVEIERAHMEEDAGKLTHMGGATGRIQGADFSLVDYNRAGVPLVEIVTKPIEGAGSRAPELAKAYVAAVREIVKNLGVSDARMERGNVRCDANVSLRPHGRERFGIRSETKNVNSLRAVEHAVRYEIQRHAAVLDAGEPVIQETRHWHEDTRTTTSGRAKSDADDYRYFPEPDLVPMVASREWVEELRATLPEPPAERRKRLKADWGYSDLEFRDVVNAGVLDEIEETISAGASASVARKWWMGEIVGRAKAADVDPGHLGVQPATIVELAKMVEDGKINNKMASQVLDGVLAGEGTPEEIVEKRGLAVVSDDGPLLEAIDAALAAQPDVADKIRGGKVQAIGAIVGGVMKATRGQADAGRVRELILEKLGVTA.

Belongs to the GatB/GatE family. GatB subfamily. In terms of assembly, heterotrimer of A, B and C subunits.

The enzyme catalyses L-glutamyl-tRNA(Gln) + L-glutamine + ATP + H2O = L-glutaminyl-tRNA(Gln) + L-glutamate + ADP + phosphate + H(+). It carries out the reaction L-aspartyl-tRNA(Asn) + L-glutamine + ATP + H2O = L-asparaginyl-tRNA(Asn) + L-glutamate + ADP + phosphate + 2 H(+). Functionally, allows the formation of correctly charged Asn-tRNA(Asn) or Gln-tRNA(Gln) through the transamidation of misacylated Asp-tRNA(Asn) or Glu-tRNA(Gln) in organisms which lack either or both of asparaginyl-tRNA or glutaminyl-tRNA synthetases. The reaction takes place in the presence of glutamine and ATP through an activated phospho-Asp-tRNA(Asn) or phospho-Glu-tRNA(Gln). This is Aspartyl/glutamyl-tRNA(Asn/Gln) amidotransferase subunit B from Pseudarthrobacter chlorophenolicus (strain ATCC 700700 / DSM 12829 / CIP 107037 / JCM 12360 / KCTC 9906 / NCIMB 13794 / A6) (Arthrobacter chlorophenolicus).